Consider the following 396-residue polypeptide: 1-deoxy-D-xylulose 5-phosphate reductoisomerase (396 aa).

NADPH-binding residues include T13, G14, S15, I16, and N127. K128 is a binding site for 1-deoxy-D-xylulose 5-phosphate. NADPH is bound at residue E129. Mn(2+) is bound at residue D153. 1-deoxy-D-xylulose 5-phosphate contacts are provided by S154, E155, S184, and H207. A Mn(2+)-binding site is contributed by E155. G213 contributes to the NADPH binding site. Residues S220, N225, K226, and E229 each contribute to the 1-deoxy-D-xylulose 5-phosphate site. E229 is a Mn(2+) binding site.

Belongs to the DXR family. The cofactor is Mg(2+). Mn(2+) is required as a cofactor.

The enzyme catalyses 2-C-methyl-D-erythritol 4-phosphate + NADP(+) = 1-deoxy-D-xylulose 5-phosphate + NADPH + H(+). The protein operates within isoprenoid biosynthesis; isopentenyl diphosphate biosynthesis via DXP pathway; isopentenyl diphosphate from 1-deoxy-D-xylulose 5-phosphate: step 1/6. In terms of biological role, catalyzes the NADPH-dependent rearrangement and reduction of 1-deoxy-D-xylulose-5-phosphate (DXP) to 2-C-methyl-D-erythritol 4-phosphate (MEP). In Pseudomonas syringae pv. tomato (strain ATCC BAA-871 / DC3000), this protein is 1-deoxy-D-xylulose 5-phosphate reductoisomerase.